Reading from the N-terminus, the 431-residue chain is 3-isopropylmalate dehydratase large subunit (431 aa).

Residues cysteine 300, cysteine 360, and cysteine 363 each contribute to the [4Fe-4S] cluster site.

The protein belongs to the aconitase/IPM isomerase family. LeuC type 2 subfamily. Heterodimer of LeuC and LeuD. [4Fe-4S] cluster is required as a cofactor.

The catalysed reaction is (2R,3S)-3-isopropylmalate = (2S)-2-isopropylmalate. It participates in amino-acid biosynthesis; L-leucine biosynthesis; L-leucine from 3-methyl-2-oxobutanoate: step 2/4. In terms of biological role, catalyzes the isomerization between 2-isopropylmalate and 3-isopropylmalate, via the formation of 2-isopropylmaleate. In Sulfurihydrogenibium sp. (strain YO3AOP1), this protein is 3-isopropylmalate dehydratase large subunit.